We begin with the raw amino-acid sequence, 237 residues long: Urease accessory protein UreF (237 aa).

It belongs to the UreF family. UreD, UreF and UreG form a complex that acts as a GTP-hydrolysis-dependent molecular chaperone, activating the urease apoprotein by helping to assemble the nickel containing metallocenter of UreC. The UreE protein probably delivers the nickel.

The protein resides in the cytoplasm. Required for maturation of urease via the functional incorporation of the urease nickel metallocenter. The chain is Urease accessory protein UreF from Streptococcus thermophilus (strain ATCC BAA-250 / LMG 18311).